We begin with the raw amino-acid sequence, 287 residues long: MHSKPQWLRAKAPTGEVFNETLNIVKLHNLHTVCEEAACPNIGECWNKRHATVMILGSVCTRACAFCNVATGIPDKLDPHEPENLAKAIKKLNLKHVVITSVDRDDLPDGGANQFIQCIEEIRKITSETTIEILTPDFLNKKGAFEAIAVASPDVYNHNIETVPRLYAKIRPRARYFHSLYLLKMVKQINPKVFTKSGLMVGLGETKEEIFQVMDDLRSAEVDFITIGQYLQPTPKHAKLDRYVTPEEFEHYKYIAYSKGFLVVASSPLTRSSYHAEEDFNRLKACR.

[4Fe-4S] cluster-binding residues include Cys-34, Cys-39, Cys-45, Cys-60, Cys-64, Cys-67, and Ser-273. Residues 46–262 form the Radical SAM core domain; that stretch reads WNKRHATVMI…KYIAYSKGFL (217 aa).

It belongs to the radical SAM superfamily. Lipoyl synthase family. [4Fe-4S] cluster serves as cofactor.

Its subcellular location is the cytoplasm. It catalyses the reaction [[Fe-S] cluster scaffold protein carrying a second [4Fe-4S](2+) cluster] + N(6)-octanoyl-L-lysyl-[protein] + 2 oxidized [2Fe-2S]-[ferredoxin] + 2 S-adenosyl-L-methionine + 4 H(+) = [[Fe-S] cluster scaffold protein] + N(6)-[(R)-dihydrolipoyl]-L-lysyl-[protein] + 4 Fe(3+) + 2 hydrogen sulfide + 2 5'-deoxyadenosine + 2 L-methionine + 2 reduced [2Fe-2S]-[ferredoxin]. It functions in the pathway protein modification; protein lipoylation via endogenous pathway; protein N(6)-(lipoyl)lysine from octanoyl-[acyl-carrier-protein]: step 2/2. Its function is as follows. Catalyzes the radical-mediated insertion of two sulfur atoms into the C-6 and C-8 positions of the octanoyl moiety bound to the lipoyl domains of lipoate-dependent enzymes, thereby converting the octanoylated domains into lipoylated derivatives. This chain is Lipoyl synthase, found in Wolbachia sp. subsp. Drosophila simulans (strain wRi).